Consider the following 694-residue polypeptide: Ubiquitin-like modifier-activating enzyme ATG7 (694 aa).

A GXGXXG motif motif is present at residues 370–375 (GAGTLG). The active-site Glycyl thioester intermediate is the cysteine 550. Residues 650–689 (ALQEKEYVAELSGLAEVQRRAEEMAAHVDWEEDDDLVDDG) form a homodimerization region.

This sequence belongs to the ATG7 family. As to quaternary structure, homodimer. Interacts with ATG8 through a thioester bond between Cys-550 and the C-terminal 'Gly-116' of ATG8 and with ATG12 through a thioester bond between Cys-550 and the C-terminal 'Gly-160' of ATG12. Also interacts with ATG3.

The protein localises to the cytoplasm. The protein resides in the preautophagosomal structure. E1-like activating enzyme involved in the 2 ubiquitin-like systems required for cytoplasm to vacuole transport (Cvt) and autophagy. Activates ATG12 for its conjugation with ATG5 and ATG8 for its conjugation with phosphatidylethanolamine. Both systems are needed for the ATG8 association to Cvt vesicles and autophagosomes membranes. Autophagy is essential for maintenance of amino acid levels and protein synthesis under nitrogen starvation. Required for selective autophagic degradation of the nucleus (nucleophagy) as well as for mitophagy which contributes to regulate mitochondrial quantity and quality by eliminating the mitochondria to a basal level to fulfill cellular energy requirements and preventing excess ROS production. Autophagy is required for proper vegetative growth, asexual/sexual reproduction, and full virulence. Autophagy is particularly involved in the biosynthesis of deoxynivalenol (DON), an important virulence determinant. The chain is Ubiquitin-like modifier-activating enzyme ATG7 from Gibberella zeae (strain ATCC MYA-4620 / CBS 123657 / FGSC 9075 / NRRL 31084 / PH-1) (Wheat head blight fungus).